We begin with the raw amino-acid sequence, 224 residues long: Steroid receptor RNA activator 1 (224 aa).

Disordered stretches follow at residues 1–90 (MAEL…EPTS) and 201–224 (AANE…QQAS). Residues S48, S57, and S75 each carry the phosphoserine modification. The span at 58–76 (PGPPPMGPPPPSSKAPRSP) shows a compositional bias: pro residues. Residues 201-215 (AANEEKSAATAEKNH) show a composition bias toward basic and acidic residues.

Belongs to the SRA1 family. SRA1 RNA exists in a ribonucleoprotein complex containing NCOA1. The RNA also forms a complex with PUS1 and RARG in the nucleus. Interacts with AR. As to expression, highly expressed in liver and skeletal muscle and to a lesser extent in brain. Also expressed in both normal and tumorigenic breast epithelial cell lines. Significantly up-regulated in human tumors of the breast, ovary, and uterus.

Its subcellular location is the nucleus. The protein localises to the cytoplasm. Its function is as follows. Functional RNA which acts as a transcriptional coactivator that selectively enhances steroid receptor-mediated transactivation ligand-independently through a mechanism involving the modulating N-terminal domain (AF-1) of steroid receptors. Also mediates transcriptional coactivation of steroid receptors ligand-dependently through the steroid-binding domain (AF-2). Enhances cellular proliferation and differentiation and promotes apoptosis in vivo. May play a role in tumorigenesis. In Homo sapiens (Human), this protein is Steroid receptor RNA activator 1.